Reading from the N-terminus, the 136-residue chain is Holo-[acyl-carrier-protein] synthase (136 aa).

The Mg(2+) site is built by D8 and E57.

It belongs to the P-Pant transferase superfamily. AcpS family. Mg(2+) serves as cofactor.

It is found in the cytoplasm. It catalyses the reaction apo-[ACP] + CoA = holo-[ACP] + adenosine 3',5'-bisphosphate + H(+). Functionally, transfers the 4'-phosphopantetheine moiety from coenzyme A to a Ser of acyl-carrier-protein. The polypeptide is Holo-[acyl-carrier-protein] synthase (Methylobacterium radiotolerans (strain ATCC 27329 / DSM 1819 / JCM 2831 / NBRC 15690 / NCIMB 10815 / 0-1)).